Reading from the N-terminus, the 667-residue chain is Beta-galactosidase LacZ (667 aa).

Arg109 is a substrate binding site. Residue Cys113 participates in Zn(2+) binding. Residue Asn147 participates in substrate binding. Catalysis depends on Glu148, which acts as the Proton donor. Zn(2+) contacts are provided by Cys153, Cys155, and Cys158. Glu307 (nucleophile) is an active-site residue. Substrate contacts are provided by residues Trp315 and 355 to 358 (EKFH).

The protein belongs to the glycosyl hydrolase 42 family.

The catalysed reaction is Hydrolysis of terminal non-reducing beta-D-galactose residues in beta-D-galactosides.. In terms of biological role, catalyzes the hydrolysis of lactose to its constituent monosaccharides glucose and galactose. The polypeptide is Beta-galactosidase LacZ (Lactobacillus acidophilus (strain ATCC 700396 / NCK56 / N2 / NCFM)).